The following is a 120-amino-acid chain: Large ribosomal subunit protein uL18 (120 aa).

It belongs to the universal ribosomal protein uL18 family. As to quaternary structure, part of the 50S ribosomal subunit; part of the 5S rRNA/L5/L18/L25 subcomplex. Contacts the 5S and 23S rRNAs.

In terms of biological role, this is one of the proteins that bind and probably mediate the attachment of the 5S RNA into the large ribosomal subunit, where it forms part of the central protuberance. The chain is Large ribosomal subunit protein uL18 from Rhizobium etli (strain ATCC 51251 / DSM 11541 / JCM 21823 / NBRC 15573 / CFN 42).